Here is a 37-residue protein sequence, read N- to C-terminus: Lambda-hexatoxin-Hf1a (37 aa).

Disulfide bonds link Cys4/Cys18, Cys11/Cys23, Cys14/Cys15, and Cys17/Cys34.

It belongs to the neurotoxin 11 (kappa toxin) family. As to expression, expressed by the venom gland.

Its subcellular location is the secreted. Its function is as follows. This excitatory toxin inhibits insect calcium-activated potassium (KCa) channels (Slo-type). The sequence is that of Lambda-hexatoxin-Hf1a from Hadronyche formidabilis (Northern tree funnel-web spider).